Reading from the N-terminus, the 210-residue chain is Glycerol-3-phosphate acyltransferase (210 aa).

The next 5 membrane-spanning stretches (helical) occupy residues 4-24 (LIVA…IVSA), 52-72 (AAIL…WLTG), 82-102 (DTSV…PVFF), 118-138 (LAIN…VAFF), and 159-179 (FLFG…LLIW).

It belongs to the PlsY family. As to quaternary structure, probably interacts with PlsX.

Its subcellular location is the cell inner membrane. The enzyme catalyses an acyl phosphate + sn-glycerol 3-phosphate = a 1-acyl-sn-glycero-3-phosphate + phosphate. It participates in lipid metabolism; phospholipid metabolism. Its function is as follows. Catalyzes the transfer of an acyl group from acyl-phosphate (acyl-PO(4)) to glycerol-3-phosphate (G3P) to form lysophosphatidic acid (LPA). This enzyme utilizes acyl-phosphate as fatty acyl donor, but not acyl-CoA or acyl-ACP. This chain is Glycerol-3-phosphate acyltransferase, found in Paraburkholderia phymatum (strain DSM 17167 / CIP 108236 / LMG 21445 / STM815) (Burkholderia phymatum).